The sequence spans 443 residues: 26S proteasome regulatory subunit rpn501 (443 aa).

Residue S209 is modified to Phosphoserine. One can recognise a PCI domain in the interval 230-402 (DVCKYYRAVY…QVISFKKSQN (173 aa)).

It belongs to the proteasome subunit p55 family.

The protein localises to the nucleus. Acts as a regulatory subunit of the 26S proteasome which is involved in the ATP-dependent degradation of ubiquitinated proteins. Required for proper proteasome assembly. The protein is 26S proteasome regulatory subunit rpn501 (rpn501) of Schizosaccharomyces pombe (strain 972 / ATCC 24843) (Fission yeast).